A 546-amino-acid polypeptide reads, in one-letter code: Zinc finger and BTB domain-containing protein 7A (546 aa).

One can recognise a BTB domain in the interval 34–101 (CDVVILVEGQ…AYTATLTVST (68 aa)). The tract at residues 189–288 (QEDEEEPDCN…SFVPTGAEAE (100 aa)) is disordered. 3 consecutive C2H2-type zinc fingers follow at residues 359–381 (QKCP…IRTH), 387–409 (YECN…MRKH), and 415–437 (YLCQ…MRVH). The segment at 443–467 (YQCDSCFKTFVRSDHLHRHLKKDGC) adopts a C2H2-type 4; atypical zinc-finger fold. A disordered region spans residues 463 to 546 (KKDGCNGIPS…AAEGSAPGPS (84 aa)). Residues 534 to 546 (AGGAAEGSAPGPS) show a composition bias toward low complexity.

The protein localises to the nucleus. Its function is as follows. Transcription factor that represses the transcription of a wide range of genes involved in cell proliferation and differentiation. Directly and specifically binds to the consensus sequence 5'-[GA][CA]GACCCCCCCCC-3' and represses transcription both by regulating the organization of chromatin and through the direct recruitment of transcription factors to gene regulatory regions. May also play a role, independently of its transcriptional activity, in double-strand break repair via classical non-homologous end joining/cNHEJ and in alternative splicing. The polypeptide is Zinc finger and BTB domain-containing protein 7A (Gallus gallus (Chicken)).